A 129-amino-acid chain; its full sequence is Small ribosomal subunit protein uS11 (129 aa).

This sequence belongs to the universal ribosomal protein uS11 family. In terms of assembly, part of the 30S ribosomal subunit. Interacts with proteins S7 and S18. Binds to IF-3.

Located on the platform of the 30S subunit, it bridges several disparate RNA helices of the 16S rRNA. Forms part of the Shine-Dalgarno cleft in the 70S ribosome. The sequence is that of Small ribosomal subunit protein uS11 from Geobacillus sp. (strain WCH70).